Reading from the N-terminus, the 572-residue chain is Formate--tetrahydrofolate ligase (572 aa).

Position 65–72 (65–72 (TPLGEGKT)) interacts with ATP.

This sequence belongs to the formate--tetrahydrofolate ligase family.

The enzyme catalyses (6S)-5,6,7,8-tetrahydrofolate + formate + ATP = (6R)-10-formyltetrahydrofolate + ADP + phosphate. The protein operates within one-carbon metabolism; tetrahydrofolate interconversion. The chain is Formate--tetrahydrofolate ligase from Chloroflexus aurantiacus (strain ATCC 29366 / DSM 635 / J-10-fl).